Consider the following 1129-residue polypeptide: Protein LANA1 (1129 aa).

Disordered regions lie at residues 1-988 (MAPP…PVPY) and 1110-1129 (LPLTQPGENQGPGDSPQEMT). Composition is skewed to basic and acidic residues over residues 28–41 (RSPERCDLGDDLHL) and 48–58 (VADSVDGRECG). Over residues 85–104 (PVAPIPSPAPATPLPPPALL) the composition is skewed to pro residues. A compositionally biased stretch (polar residues) spans 139-156 (SPESSQRPPLSSPTGRPD). The segment covering 161–185 (MRPPPSQQTTPPHSPTTPPPEPPSK) has biased composition (pro residues). The span at 186 to 197 (SSPDSLAPSTLR) shows a compositional bias: low complexity. Polar residues predominate over residues 207–217 (PQGPSTLNPIC). Residues 263–275 (PISIGSSSPSEGS) are compositionally biased toward low complexity. Basic and acidic residues-rich tracts occupy residues 292-301 (EASKNEKECS) and 314-323 (EISKESQVDK). Residues 324 to 419 (DDNDNKDDEE…DKKEDEEDGG (96 aa)) show a composition bias toward acidic residues. Residues 431–471 (QQQQEPQQQEPQQQEPQQQEPQQQEPQQQEPQQQEPQQQEP) are compositionally biased toward low complexity. Residues 472 to 528 (QQREPQQREPQQREPQQREPQQREPQQREPQQREPQQREPQQREPQQREPQQREPQQ) show a composition bias toward basic and acidic residues. Residues 529–596 (REPQQQEPQQ…QQQEPQQQDE (68 aa)) are compositionally biased toward low complexity. Residues 597 to 888 (QQQDEQQQDE…QELEEVEEQE (292 aa)) show a composition bias toward acidic residues. Residues 924 to 934 (THEQIASSPPG) are compositionally biased toward polar residues. Over residues 962–979 (PGVRMRRVPVTHPKKPHP) the composition is skewed to basic residues. The tract at residues 1008 to 1129 (FLGKDGRRDP…GPGDSPQEMT (122 aa)) is DNA-binding domain.

In terms of assembly, homooligomer. Interacts with host BRD2. Interacts with host RELA, ELOB, ELOC and CUL5; these interactions induce the proteasomal degradation of host RELA. Interacts with host TRIM28 and NFE2L2/NRF2; these interactions are essential for the shutdown of lytic gene expression during the early stage of infection. Interacts (via N-terminus) with host histones H2A and H2B; these interactions are essential to dock LANA1 onto chromosomes. Interacts with host BUB1 and PCNA. Interacts with host NAP1L1; this interaction is required for LANA1-dependent DNA replication. Interacts with components of the host MLL1 complex KMT2A and WDR5.

The protein resides in the host nucleus. In terms of biological role, multifunctional protein that plays a role in the replication and long-term persistence of the viral episomal genome in dividing cells. Binds to mitotic chromosomes via its N-terminal region and to a 16-bp imperfect palindrome within the origin of replication (oriP) located in the viral terminal repeat (TR) through its C-terminal. Tethers viral episomes to chromosomes during mitosis. Plays a critical role in the shutdown of lytic gene expression during the early stage of infection by interacting with host TRIM28. Also plays a role in the repression of host NF-kappa-B activity upon TNF-alpha stimulation by promoting the proteasomal degradation of host RELA. Promotes nuclear localization and cleavage of host STAT6 leading to constitutive activation of the IL13/STAT6 signaling pathway to promote viral latency. Interacts with and modulates the histone methyltransferase MLL1 complex activity, leading to its recruitment on viral DNA terminal repeats changing the dynamic of histone H3 methylated 'Lys-4'(H3K4me) profile during the initial hours following infection. The sequence is that of Protein LANA1 (LANA1) from Homo sapiens (Human).